The sequence spans 439 residues: Actin-related protein 3 (439 aa).

Residues 40 to 71 are disordered; it reads PSAGTGGSGSGRPAVANKPSFLTGGAGPGGHL.

It belongs to the actin family. ARP3 subfamily. Component of the Arp2/3 complex composed.

The protein resides in the cytoplasm. It localises to the cytoskeleton. Functions as ATP-binding component of the Arp2/3 complex which is involved in regulation of actin polymerization and together with an activating nucleation-promoting factor (NPF) mediates the formation of branched actin networks. Seems to contact the pointed end of the daughter actin filament. In Neurospora crassa (strain ATCC 24698 / 74-OR23-1A / CBS 708.71 / DSM 1257 / FGSC 987), this protein is Actin-related protein 3 (arp-3).